Consider the following 407-residue polypeptide: Cation efflux system protein CusB (407 aa).

The signal sequence occupies residues 1 to 28 (MKKIALIIGSMIAGGIISAAGFTWFAKA).

This sequence belongs to the membrane fusion protein (MFP) (TC 8.A.1) family. As to quaternary structure, the cus efflux system is composed of CusA, CusB, CusC and CusF.

Its function is as follows. Part of a cation efflux system that mediates resistance to copper and silver. The protein is Cation efflux system protein CusB (cusB) of Escherichia coli O157:H7.